Here is a 41-residue protein sequence, read N- to C-terminus: Ornatin-A3 (41 aa).

The Cell attachment site signature appears at 33 to 35 (RGD).

The protein belongs to the ornatin family.

The protein resides in the secreted. Potent inhibitor of fibrinogen interaction with platelet receptors expressed on glycoprotein IIb-IIIa complex. May prevent blood from clotting during either feeding and/or storage of ingested blood. In Placobdella ornata (Turtle leech), this protein is Ornatin-A3.